A 921-amino-acid polypeptide reads, in one-letter code: TRPM8 channel-associated factor 1 (921 aa).

The Peptidase M60 domain occupies 542-841; sequence YCWMSTGLYI…TYLQLQEAFG (300 aa).

This sequence belongs to the TCAF family. In terms of assembly, interacts with TRPM8 (via N-terminus and C-terminus domains); the interaction inhibits TRPM8 channel activity. Interacts with TRPV6.

It localises to the cell membrane. Its function is as follows. Positively regulates the plasma membrane cation channel TRPM8 activity. Involved in the recruitment of TRPM8 to the cell surface. Promotes prostate cancer cell migration inhibition in a TRPM8-dependent manner. In Bos taurus (Bovine), this protein is TRPM8 channel-associated factor 1.